The primary structure comprises 338 residues: Nicotinate-nucleotide--dimethylbenzimidazole phosphoribosyltransferase (338 aa).

E305 functions as the Proton acceptor in the catalytic mechanism.

This sequence belongs to the CobT family.

It carries out the reaction 5,6-dimethylbenzimidazole + nicotinate beta-D-ribonucleotide = alpha-ribazole 5'-phosphate + nicotinate + H(+). It participates in nucleoside biosynthesis; alpha-ribazole biosynthesis; alpha-ribazole from 5,6-dimethylbenzimidazole: step 1/2. Catalyzes the synthesis of alpha-ribazole-5'-phosphate from nicotinate mononucleotide (NAMN) and 5,6-dimethylbenzimidazole (DMB). This chain is Nicotinate-nucleotide--dimethylbenzimidazole phosphoribosyltransferase, found in Rhizobium leguminosarum bv. trifolii (strain WSM2304).